The sequence spans 266 residues: MKEIKVIIAGPRGRMGHEAVLLMERTEHFNLVAAVDYKHGGEKISDLPGMPALDTPIYADLHTCLEEVEADVLLDLTTPEVGKQHVTLAVERGLRSVIGTTGFTEEELKQLTETAKEKAVGTIIAPNFAIGAVLMMKFSQMAAKYFQDVEVIELHHDQKLDAPSGTAVKTVELIRQNRESKQQGHPNEVEQLKGARGANVDGIHIHSVRLPGLIAHQEVMFGGDGQMLTVRHDSFNRASFMSGVKLSIETVMNLDHLVYGLENIID.

10-15 (GPRGRM) contributes to the NAD(+) binding site. K38 is a binding site for NADP(+). NAD(+) contacts are provided by residues 99-101 (GTT) and 125-128 (APNF). The active-site Proton donor/acceptor is H155. H156 is a binding site for (S)-2,3,4,5-tetrahydrodipicolinate. Catalysis depends on K159, which acts as the Proton donor. Position 165–166 (165–166 (GT)) interacts with (S)-2,3,4,5-tetrahydrodipicolinate.

This sequence belongs to the DapB family.

The protein localises to the cytoplasm. The enzyme catalyses (S)-2,3,4,5-tetrahydrodipicolinate + NAD(+) + H2O = (2S,4S)-4-hydroxy-2,3,4,5-tetrahydrodipicolinate + NADH + H(+). It catalyses the reaction (S)-2,3,4,5-tetrahydrodipicolinate + NADP(+) + H2O = (2S,4S)-4-hydroxy-2,3,4,5-tetrahydrodipicolinate + NADPH + H(+). The protein operates within amino-acid biosynthesis; L-lysine biosynthesis via DAP pathway; (S)-tetrahydrodipicolinate from L-aspartate: step 4/4. In terms of biological role, catalyzes the conversion of 4-hydroxy-tetrahydrodipicolinate (HTPA) to tetrahydrodipicolinate. The polypeptide is 4-hydroxy-tetrahydrodipicolinate reductase (Bacillus cereus (strain ATCC 10987 / NRS 248)).